A 216-amino-acid chain; its full sequence is Putative cat eye syndrome critical region protein 9 (216 aa).

The first 23 residues, 1–23 (MQSHLAPLACAAAAGRAGGSCQA), serve as a signal peptide directing secretion. Asparagine 148 carries N-linked (GlcNAc...) asparagine glycosylation.

Ubiquitously expressed with higher expression in heart.

It is found in the secreted. In Homo sapiens (Human), this protein is Putative cat eye syndrome critical region protein 9 (CECR9).